The primary structure comprises 278 residues: HTH-type transcriptional activator RhaS (278 aa).

Residues 174–272 (NLLLAWLEDH…NWSPRDIRQG (99 aa)) enclose the HTH araC/xylS-type domain. DNA-binding regions (H-T-H motif) lie at residues 191–212 (DAVA…KQKT) and 239–262 (VTDI…RREF).

In terms of assembly, binds DNA as a dimer.

Its subcellular location is the cytoplasm. In terms of biological role, activates expression of the rhaBAD and rhaT operons. The protein is HTH-type transcriptional activator RhaS of Escherichia coli O45:K1 (strain S88 / ExPEC).